The primary structure comprises 156 residues: MKLFILAVGHKMPGWIASGFDEYTKRMPPELRIELREIKPELRSGGRSADSVMAAERQKIEAALPKGARIVALDERGRDWTTMQLAQALPGWQQDGRDVAFVIGGADGLDPELKARADVLLRISSMTLPHGMVRVLLAEQLYRAWSITQNHPYHRA.

S-adenosyl-L-methionine contacts are provided by residues Leu73, Gly104, and 123 to 128; that span reads ISSMTL.

Belongs to the RNA methyltransferase RlmH family. Homodimer.

The protein localises to the cytoplasm. The catalysed reaction is pseudouridine(1915) in 23S rRNA + S-adenosyl-L-methionine = N(3)-methylpseudouridine(1915) in 23S rRNA + S-adenosyl-L-homocysteine + H(+). Its function is as follows. Specifically methylates the pseudouridine at position 1915 (m3Psi1915) in 23S rRNA. This is Ribosomal RNA large subunit methyltransferase H from Burkholderia ambifaria (strain ATCC BAA-244 / DSM 16087 / CCUG 44356 / LMG 19182 / AMMD) (Burkholderia cepacia (strain AMMD)).